We begin with the raw amino-acid sequence, 251 residues long: Probable transcriptional regulatory protein TGRD_462 (251 aa).

Belongs to the TACO1 family.

Its subcellular location is the cytoplasm. The protein is Probable transcriptional regulatory protein TGRD_462 of Endomicrobium trichonymphae.